Consider the following 300-residue polypeptide: MVKKYGIVAIVGKPNVGKSTLINAIMRKKVSIISNKPQTTRNAIKEIYEDDDSAIIFTDTPGFHEPSNKLDLFLNHEIEVSYKEANVILFVSSMDKELSEDDFEIINLIKESNKENVILVISKAEVAKNQDKIDERVHQLNKYIQFKDVIQISALHVINIDKLINTIKQYLHKDVVTDYFRQKVEKEDKFIIAETIREQCLLNLNHEVPHGVGVEIDESKYNQEANHWIIKASIIIEKNSHKPIVIGQNGAMIKKISMAARKQLHEIYDCHISLTIFVKVENNWRENNNVVKSLGYKIKK.

The region spanning 4 to 173 (KYGIVAIVGK…INTIKQYLHK (170 aa)) is the Era-type G domain. The G1 stretch occupies residues 12-19 (GKPNVGKS). 12–19 (GKPNVGKS) provides a ligand contact to GTP. Residues 38–42 (QTTRN) are G2. The G3 stretch occupies residues 59–62 (DTPG). Residues 59–63 (DTPGF) and 122–125 (SKAE) contribute to the GTP site. The G4 stretch occupies residues 122-125 (SKAE). The segment at 152-154 (ISA) is G5. The region spanning 204–282 (LNHEVPHGVG…SLTIFVKVEN (79 aa)) is the KH type-2 domain.

Belongs to the TRAFAC class TrmE-Era-EngA-EngB-Septin-like GTPase superfamily. Era GTPase family. Monomer.

Its subcellular location is the cytoplasm. The protein resides in the cell membrane. An essential GTPase that binds both GDP and GTP, with rapid nucleotide exchange. Plays a role in 16S rRNA processing and 30S ribosomal subunit biogenesis and possibly also in cell cycle regulation and energy metabolism. The chain is GTPase Era from Ureaplasma urealyticum serovar 10 (strain ATCC 33699 / Western).